A 500-amino-acid polypeptide reads, in one-letter code: Cytochrome P450 2D26 (500 aa).

Ser-249 is modified (phosphoserine). Cys-446 lines the heme pocket.

It belongs to the cytochrome P450 family. Heme is required as a cofactor.

The protein localises to the endoplasmic reticulum membrane. It localises to the microsome membrane. The enzyme catalyses an organic molecule + reduced [NADPH--hemoprotein reductase] + O2 = an alcohol + oxidized [NADPH--hemoprotein reductase] + H2O + H(+). Its function is as follows. Cytochromes P450 are a group of heme-thiolate monooxygenases. In liver microsomes, this enzyme is involved in an NADPH-dependent electron transport pathway. It oxidizes a variety of structurally unrelated compounds, including steroids, fatty acids, and xenobiotics. The sequence is that of Cytochrome P450 2D26 (Cyp2d26) from Rattus norvegicus (Rat).